The sequence spans 86 residues: Small ribosomal subunit protein bS16 (86 aa).

The protein belongs to the bacterial ribosomal protein bS16 family.

This is Small ribosomal subunit protein bS16 from Nostoc punctiforme (strain ATCC 29133 / PCC 73102).